Here is a 105-residue protein sequence, read N- to C-terminus: Met repressor (105 aa).

It belongs to the MetJ family. Homodimer.

It localises to the cytoplasm. Its function is as follows. This regulatory protein, when combined with SAM (S-adenosylmethionine) represses the expression of the methionine regulon and of enzymes involved in SAM synthesis. This is Met repressor from Erwinia tasmaniensis (strain DSM 17950 / CFBP 7177 / CIP 109463 / NCPPB 4357 / Et1/99).